A 316-amino-acid chain; its full sequence is Ribosomal protein L11 methyltransferase (316 aa).

Threonine 157, glycine 178, aspartate 200, and asparagine 243 together coordinate S-adenosyl-L-methionine.

This sequence belongs to the methyltransferase superfamily. PrmA family.

Its subcellular location is the cytoplasm. The enzyme catalyses L-lysyl-[protein] + 3 S-adenosyl-L-methionine = N(6),N(6),N(6)-trimethyl-L-lysyl-[protein] + 3 S-adenosyl-L-homocysteine + 3 H(+). In terms of biological role, methylates ribosomal protein L11. This is Ribosomal protein L11 methyltransferase from Streptococcus pneumoniae (strain P1031).